The following is a 186-amino-acid chain: Pyridoxal 5'-phosphate synthase subunit PdxT (186 aa).

46–48 (GES) is an L-glutamine binding site. The Nucleophile role is filled by C75. L-glutamine is bound by residues R101 and 129 to 130 (IR). Active-site charge relay system residues include H165 and E167.

It belongs to the glutaminase PdxT/SNO family. In terms of assembly, in the presence of PdxS, forms a dodecamer of heterodimers. Only shows activity in the heterodimer.

It catalyses the reaction aldehydo-D-ribose 5-phosphate + D-glyceraldehyde 3-phosphate + L-glutamine = pyridoxal 5'-phosphate + L-glutamate + phosphate + 3 H2O + H(+). The enzyme catalyses L-glutamine + H2O = L-glutamate + NH4(+). The protein operates within cofactor biosynthesis; pyridoxal 5'-phosphate biosynthesis. In terms of biological role, catalyzes the hydrolysis of glutamine to glutamate and ammonia as part of the biosynthesis of pyridoxal 5'-phosphate. The resulting ammonia molecule is channeled to the active site of PdxS. This Staphylococcus aureus (strain Mu3 / ATCC 700698) protein is Pyridoxal 5'-phosphate synthase subunit PdxT.